Consider the following 124-residue polypeptide: Tax1-binding protein 3 (124 aa).

Serine 2 bears the N-acetylserine mark. The PDZ domain maps to 15-112; that stretch reads RVEIHKLRQG…EVVRLLVTRQ (98 aa). Serine 61 carries the post-translational modification Phosphoserine.

As to quaternary structure, interacts (via its PDZ domain) with GLS2. Interacts (via its PDZ domain) with RTKN (via the C-terminal region); this interaction facilitates Rho-mediated activation of the FOS serum response element (SRE). Interacts (via its PDZ domain) with CTNNB1; this interaction inhibits the transcriptional activity of CTNNB1. Interacts with HTLV-1 TAX protein. Interacts (via PDZ domain) with ARHGEF16. Interacts (via PDZ domain) with KCNJ4 (via C-terminus). Competes with LIN7A for KCNJ4 binding. Interacts with ADGRB2. As to expression, ubiquitous. Detected in brain, heart, kidney, lung, small intestine and skeletal muscle. Detected in various cell lines including HeLa. Weakly expressed in peripheral blood leukocytes.

It is found in the cytoplasm. The protein localises to the nucleus. Its subcellular location is the cell membrane. Its function is as follows. May regulate a number of protein-protein interactions by competing for PDZ domain binding sites. Binds CTNNB1 and may thereby act as an inhibitor of the Wnt signaling pathway. Competes with LIN7A for KCNJ4 binding, and thereby promotes KCNJ4 internalization. May play a role in the Rho signaling pathway. May play a role in activation of CDC42 by the viral protein HPV16 E6. The chain is Tax1-binding protein 3 from Homo sapiens (Human).